Here is a 323-residue protein sequence, read N- to C-terminus: Acetyl esterase (323 aa).

The Involved in the stabilization of the negatively charged intermediate by the formation of the oxyanion hole motif lies at 91-93 (HGG). Active-site residues include Ser165, Asp262, and His292.

The protein belongs to the 'GDXG' lipolytic enzyme family. In terms of assembly, homodimer. Interacts with MalT and MelA.

It localises to the cytoplasm. Displays esterase activity towards short chain fatty esters (acyl chain length of up to 8 carbons). Able to hydrolyze triacetylglycerol (triacetin) and tributyrylglycerol (tributyrin), but not trioleylglycerol (triolein) or cholesterol oleate. Negatively regulates MalT activity by antagonizing maltotriose binding. Inhibits MelA galactosidase activity. This Salmonella choleraesuis (strain SC-B67) protein is Acetyl esterase.